The following is a 536-amino-acid chain: Phosphoenolpyruvate carboxykinase (ATP) (536 aa).

Substrate is bound by residues Arg62, Tyr203, and Lys209. ATP contacts are provided by residues Lys209, His228, and 244 to 252 (GLSGTGKTT). Mn(2+) contacts are provided by Lys209 and His228. Position 265 (Asp265) interacts with Mn(2+). Residues Glu293, Arg329, 445-446 (RI), and Thr451 contribute to the ATP site. Arg329 contributes to the substrate binding site.

This sequence belongs to the phosphoenolpyruvate carboxykinase (ATP) family. Monomer. Requires Mn(2+) as cofactor.

The protein resides in the cytoplasm. It catalyses the reaction oxaloacetate + ATP = phosphoenolpyruvate + ADP + CO2. The protein operates within carbohydrate biosynthesis; gluconeogenesis. Functionally, involved in the gluconeogenesis. Catalyzes the conversion of oxaloacetate (OAA) to phosphoenolpyruvate (PEP) through direct phosphoryl transfer between the nucleoside triphosphate and OAA. This is Phosphoenolpyruvate carboxykinase (ATP) from Actinobacillus pleuropneumoniae serotype 7 (strain AP76).